The primary structure comprises 63 residues: Small ribosomal subunit protein eS30B (63 aa).

Residues 1–35 (MAKVHGSLARAGKVKSQTPKVEKTEKPKKPKGRAY) are disordered. S16 bears the Phosphoserine mark. The residue at position 48 (T48) is a Phosphothreonine.

Belongs to the eukaryotic ribosomal protein eS30 family. As to quaternary structure, component of the small ribosomal subunit (SSU). Mature yeast ribosomes consist of a small (40S) and a large (60S) subunit. The 40S small subunit contains 1 molecule of ribosomal RNA (18S rRNA) and 33 different proteins (encoded by 57 genes). The large 60S subunit contains 3 rRNA molecules (25S, 5.8S and 5S rRNA) and 46 different proteins (encoded by 81 genes).

The protein localises to the cytoplasm. Functionally, component of the ribosome, a large ribonucleoprotein complex responsible for the synthesis of proteins in the cell. The small ribosomal subunit (SSU) binds messenger RNAs (mRNAs) and translates the encoded message by selecting cognate aminoacyl-transfer RNA (tRNA) molecules. The large subunit (LSU) contains the ribosomal catalytic site termed the peptidyl transferase center (PTC), which catalyzes the formation of peptide bonds, thereby polymerizing the amino acids delivered by tRNAs into a polypeptide chain. The nascent polypeptides leave the ribosome through a tunnel in the LSU and interact with protein factors that function in enzymatic processing, targeting, and the membrane insertion of nascent chains at the exit of the ribosomal tunnel. This chain is Small ribosomal subunit protein eS30B, found in Saccharomyces cerevisiae (strain ATCC 204508 / S288c) (Baker's yeast).